Consider the following 804-residue polypeptide: DNA gyrase subunit A (804 aa).

Positions 31–495 constitute a Topo IIA-type catalytic domain; sequence IPDVRDGLKP…QSIEYNEEEL (465 aa). The active-site O-(5'-phospho-DNA)-tyrosine intermediate is the Tyr119. Positions 522–528 match the GyrA-box motif; sequence QKRGGKG.

The protein belongs to the type II topoisomerase GyrA/ParC subunit family. Heterotetramer, composed of two GyrA and two GyrB chains. In the heterotetramer, GyrA contains the active site tyrosine that forms a transient covalent intermediate with DNA, while GyrB binds cofactors and catalyzes ATP hydrolysis.

Its subcellular location is the cytoplasm. The catalysed reaction is ATP-dependent breakage, passage and rejoining of double-stranded DNA.. A type II topoisomerase that negatively supercoils closed circular double-stranded (ds) DNA in an ATP-dependent manner to modulate DNA topology and maintain chromosomes in an underwound state. Negative supercoiling favors strand separation, and DNA replication, transcription, recombination and repair, all of which involve strand separation. Also able to catalyze the interconversion of other topological isomers of dsDNA rings, including catenanes and knotted rings. Type II topoisomerases break and join 2 DNA strands simultaneously in an ATP-dependent manner. The polypeptide is DNA gyrase subunit A (Thermotoga maritima (strain ATCC 43589 / DSM 3109 / JCM 10099 / NBRC 100826 / MSB8)).